The sequence spans 347 residues: Phenylalanine--tRNA ligase alpha subunit (347 aa).

E262 is a Mg(2+) binding site.

The protein belongs to the class-II aminoacyl-tRNA synthetase family. Phe-tRNA synthetase alpha subunit type 1 subfamily. In terms of assembly, tetramer of two alpha and two beta subunits. It depends on Mg(2+) as a cofactor.

The protein resides in the cytoplasm. It carries out the reaction tRNA(Phe) + L-phenylalanine + ATP = L-phenylalanyl-tRNA(Phe) + AMP + diphosphate + H(+). This Roseiflexus sp. (strain RS-1) protein is Phenylalanine--tRNA ligase alpha subunit.